A 215-amino-acid polypeptide reads, in one-letter code: 7-methyl-GTP pyrophosphatase (215 aa).

D79 acts as the Proton acceptor in catalysis.

The protein belongs to the Maf family. YceF subfamily. A divalent metal cation serves as cofactor.

It is found in the cytoplasm. It carries out the reaction N(7)-methyl-GTP + H2O = N(7)-methyl-GMP + diphosphate + H(+). Its function is as follows. Nucleoside triphosphate pyrophosphatase that hydrolyzes 7-methyl-GTP (m(7)GTP). May have a dual role in cell division arrest and in preventing the incorporation of modified nucleotides into cellular nucleic acids. The chain is 7-methyl-GTP pyrophosphatase from Burkholderia mallei (strain ATCC 23344).